Reading from the N-terminus, the 494-residue chain is MLALSRSKYFAFLTGTVGGLLAGVGLSQGGVVFIWISTACLWASMAFPSAVFLWGLFAILLSYRWLLYLHPLTWIGVPIAFSLPIAILIWFSCGLLGGLLVALWSLIGQIPFFQRRLNSSTKDQLLYVIALSLIWGLVEVGLAKSPFFWFGLGDSLLPYDRWLAGLARWFGSGGLAALQLILGWWVWKIIFAFKKGSPWLGLFALGVCSLLLAHCIGWILLADNEFTSSKRIALWQTNIPTRQKFTLRELKRLPISLQDALEEADNLGADWMVAPEGTLSAGQNLLAPSPLPLLSGGFRRVKNKQMSSLLVFNEGSTSYSSAIDKHRLVPLGEWLPSLPGVNWNGLSFVGGVDPGDASRFFDWDGGPLAVAICYELSDGNNLAKAIFDGAEWILAIANLDPYPISLQRQFLALAQLRSIESARNLISVANTGPTSMILSSGKIKSIIEPFNEGVGVIDINVSQKISGYVRWGEIPLISSLLIVLCFIARLKGKA.

A run of 6 helical transmembrane segments spans residues 16-36 (TVGG…FIWI), 41-61 (LWAS…AILL), 62-82 (SYRW…IAFS), 133-153 (LIWG…FGLG), 173-193 (GGLA…IFAF), and 202-222 (LFAL…ILLA). Residues 235–461 (WQTNIPTRQK…EGVGVIDINV (227 aa)) form the CN hydrolase domain. Catalysis depends on Glu276, which acts as the Proton acceptor. The active site involves Lys325. Cys373 acts as the Nucleophile in catalysis. The chain crosses the membrane as a helical span at residues 468 to 488 (YVRWGEIPLISSLLIVLCFIA).

This sequence belongs to the CN hydrolase family. Apolipoprotein N-acyltransferase subfamily.

It is found in the cell inner membrane. The enzyme catalyses N-terminal S-1,2-diacyl-sn-glyceryl-L-cysteinyl-[lipoprotein] + a glycerophospholipid = N-acyl-S-1,2-diacyl-sn-glyceryl-L-cysteinyl-[lipoprotein] + a 2-acyl-sn-glycero-3-phospholipid + H(+). The protein operates within protein modification; lipoprotein biosynthesis (N-acyl transfer). Catalyzes the phospholipid dependent N-acylation of the N-terminal cysteine of apolipoprotein, the last step in lipoprotein maturation. The protein is Apolipoprotein N-acyltransferase of Prochlorococcus marinus (strain SARG / CCMP1375 / SS120).